Here is a 282-residue protein sequence, read N- to C-terminus: CD320 antigen (282 aa).

The signal sequence occupies residues 1-35 (MSGGWMAQVGAWRTGALGLALLLLLGLGLGLEAAA). Residues 36–229 (SPLSTPTSAQ…GDQSGSPTAY (194 aa)) are Extracellular-facing. An LDL-receptor class A 1 domain is found at 53–90 (SCPPTKFQCRTSGLCVPLTWRCDRDLDCSDGSDEEECR). 3 disulfides stabilise this stretch: C54–C67, C61–C80, and C74–C89. Ca(2+)-binding residues include W72, D75, D77, D79, D85, and E86. N126 carries N-linked (GlcNAc...) asparagine glycosylation. Residues 131–168 (ACLAGELRCTLSDDCIPLTWRCDGHPDCPDSSDELGCG) enclose the LDL-receptor class A 2 domain. 3 cysteine pairs are disulfide-bonded: C132–C145, C139–C158, and C152–C167. Residues W150, D153, H155, D157, D163, and E164 each contribute to the Ca(2+) site. 2 N-linked (GlcNAc...) asparagine glycosylation sites follow: N195 and N213. The interval 199-223 (MGPPVTLESVPSVGNATSSSAGDQS) is disordered. Polar residues predominate over residues 210–223 (SVGNATSSSAGDQS). Residues 230-250 (GVIAAAAVLSASLVTATLLLL) traverse the membrane as a helical segment. Topologically, residues 251–282 (SWLRAQERLRPLGLLVAMKESLLLSEQKTSLP) are cytoplasmic.

Interacts (via LDL-receptor class A domains) with TCN2. Detected in the germinal center (GC) of lymphoid follicles (at protein level). Expressed abundantly on follicular dendritic cells (FDCs).

It is found in the cell membrane. Functionally, receptor for transcobalamin saturated with cobalamin (TCbl). Plays an important role in cobalamin uptake. Plasma membrane protein that is expressed on follicular dendritic cells (FDC) and mediates interaction with germinal center B cells. Functions as costimulator to promote B cell responses to antigenic stimuli; promotes B cell differentiation and proliferation. Germinal center-B (GC-B) cells differentiate into memory B-cells and plasma cells (PC) through interaction with T-cells and follicular dendritic cells (FDC). CD320 augments the proliferation of PC precursors generated by IL-10. The chain is CD320 antigen (CD320) from Homo sapiens (Human).